Consider the following 165-residue polypeptide: uncharacterized protein (165 aa).

The chain crosses the membrane as a helical span at residues 16–36 (ASISSILNFFFFYIMEYFVAV).

This sequence belongs to the asfivirus F165R family.

The protein resides in the host membrane. This is an uncharacterized protein from African swine fever virus (isolate Tick/Malawi/Lil 20-1/1983) (ASFV).